The primary structure comprises 252 residues: 3-dehydroquinate dehydratase (252 aa).

3-dehydroquinate-binding positions include Ser-21, Glu-46–Arg-48, and Arg-82. The active-site Proton donor/acceptor is His-143. Lys-170 (schiff-base intermediate with substrate) is an active-site residue. 3 residues coordinate 3-dehydroquinate: Arg-213, Ser-232, and Gln-236.

It belongs to the type-I 3-dehydroquinase family. In terms of assembly, homodimer.

It catalyses the reaction 3-dehydroquinate = 3-dehydroshikimate + H2O. It participates in metabolic intermediate biosynthesis; chorismate biosynthesis; chorismate from D-erythrose 4-phosphate and phosphoenolpyruvate: step 3/7. Its function is as follows. Involved in the third step of the chorismate pathway, which leads to the biosynthesis of aromatic amino acids. Catalyzes the cis-dehydration of 3-dehydroquinate (DHQ) and introduces the first double bond of the aromatic ring to yield 3-dehydroshikimate. This Escherichia coli O9:H4 (strain HS) protein is 3-dehydroquinate dehydratase.